Here is a 95-residue protein sequence, read N- to C-terminus: Aspartyl/glutamyl-tRNA(Asn/Gln) amidotransferase subunit C (95 aa).

Belongs to the GatC family. As to quaternary structure, heterotrimer of A, B and C subunits.

It carries out the reaction L-glutamyl-tRNA(Gln) + L-glutamine + ATP + H2O = L-glutaminyl-tRNA(Gln) + L-glutamate + ADP + phosphate + H(+). The enzyme catalyses L-aspartyl-tRNA(Asn) + L-glutamine + ATP + H2O = L-asparaginyl-tRNA(Asn) + L-glutamate + ADP + phosphate + 2 H(+). In terms of biological role, allows the formation of correctly charged Asn-tRNA(Asn) or Gln-tRNA(Gln) through the transamidation of misacylated Asp-tRNA(Asn) or Glu-tRNA(Gln) in organisms which lack either or both of asparaginyl-tRNA or glutaminyl-tRNA synthetases. The reaction takes place in the presence of glutamine and ATP through an activated phospho-Asp-tRNA(Asn) or phospho-Glu-tRNA(Gln). The chain is Aspartyl/glutamyl-tRNA(Asn/Gln) amidotransferase subunit C from Hyphomonas neptunium (strain ATCC 15444).